The sequence spans 122 residues: Large ribosomal subunit protein uL14 (122 aa).

The protein belongs to the universal ribosomal protein uL14 family. Part of the 50S ribosomal subunit. Forms a cluster with proteins L3 and L19. In the 70S ribosome, L14 and L19 interact and together make contacts with the 16S rRNA in bridges B5 and B8.

Binds to 23S rRNA. Forms part of two intersubunit bridges in the 70S ribosome. The chain is Large ribosomal subunit protein uL14 from Bacillus licheniformis (strain ATCC 14580 / DSM 13 / JCM 2505 / CCUG 7422 / NBRC 12200 / NCIMB 9375 / NCTC 10341 / NRRL NRS-1264 / Gibson 46).